The chain runs to 259 residues: Zinc import ATP-binding protein ZnuC (259 aa).

The 215-residue stretch at I11 to Q225 folds into the ABC transporter domain. G43–S50 contacts ATP.

Belongs to the ABC transporter superfamily. Zinc importer (TC 3.A.1.15.5) family. As to quaternary structure, the complex is composed of two ATP-binding proteins (ZnuC), two transmembrane proteins (ZnuB) and a solute-binding protein (ZnuA).

The protein resides in the cell inner membrane. It carries out the reaction Zn(2+)(out) + ATP(in) + H2O(in) = Zn(2+)(in) + ADP(in) + phosphate(in) + H(+)(in). Its function is as follows. Part of the ABC transporter complex ZnuABC involved in zinc import. Responsible for energy coupling to the transport system. The polypeptide is Zinc import ATP-binding protein ZnuC (Acinetobacter baylyi (strain ATCC 33305 / BD413 / ADP1)).